Reading from the N-terminus, the 118-residue chain is Ferredoxin-thioredoxin reductase, catalytic chain (118 aa).

C57 is a [4Fe-4S] cluster binding site. C59 functions as the Nucleophile in the catalytic mechanism. An intrachain disulfide couples C59 to C89. Residues C76, C78, and C87 each contribute to the [4Fe-4S] cluster site.

It belongs to the ferredoxin thioredoxin reductase beta subunit family. Heterodimer of subunit A (variable subunit) and subunit B (catalytic subunit). Heterodimeric FTR forms a complex with ferredoxin and thioredoxin. [4Fe-4S] cluster serves as cofactor.

The protein localises to the plastid. The protein resides in the chloroplast. The enzyme catalyses [thioredoxin]-disulfide + 2 reduced [2Fe-2S]-[ferredoxin] + 2 H(+) = [thioredoxin]-dithiol + 2 oxidized [2Fe-2S]-[ferredoxin]. Its function is as follows. Catalytic subunit of the ferredoxin-thioredoxin reductase (FTR), which catalyzes the two-electron reduction of thioredoxins by the electrons provided by reduced ferredoxin. The sequence is that of Ferredoxin-thioredoxin reductase, catalytic chain (ftrB) from Porphyra purpurea (Red seaweed).